Reading from the N-terminus, the 944-residue chain is ATP-dependent RNA helicase DDX42 (944 aa).

The span at 1–18 (MNWNKGGPGTKRGFGFGG) shows a compositional bias: gly residues. 3 disordered regions span residues 1 to 119 (MNWN…LEAF), 131 to 155 (MKRLEDKDKEKKNAKGIRDDIEEED), and 182 to 203 (EYDSDGNPIAPSKKIIDPLPPI). Residues 35-52 (SHSAFGTAGSSAAFAKSG) show a composition bias toward low complexity. Positions 70 to 84 (DEENAYFEDEEEDNS) are enriched in acidic residues. Residues 120–157 (MAEVEDQAARDMKRLEDKDKEKKNAKGIRDDIEEEDDQ) are a coiled coil. Positions 131–149 (MKRLEDKDKEKKNAKGIRD) are enriched in basic and acidic residues. A Q motif motif is present at residues 253 to 281 (SSFARFGFDEQLMHQIRKSEYTQPTPIQC). Residues 284–459 (VPVAMSGRDM…RDILIDPIRV (176 aa)) form the Helicase ATP-binding domain. Residue 297–304 (AKTGSGKT) participates in ATP binding. The DEAD box signature appears at 407-410 (DEAD). The Helicase C-terminal domain occupies 487–632 (WLTRRLVEFT…HVSKELLDLA (146 aa)). Disordered stretches follow at residues 642 to 682 (RFKG…VMSN), 723 to 753 (GSSAAGASGWTSAGSLNSVPTSSAQQNAANP), and 794 to 944 (SANA…RWDS). Over residues 723–737 (GSSAAGASGWTSAGS) the composition is skewed to low complexity. The span at 738–752 (LNSVPTSSAQQNAAN) shows a compositional bias: polar residues. Over residues 794-814 (SANASAGNREGVGSAGSAPRG) the composition is skewed to low complexity. Gly residues predominate over residues 815-824 (GSSGGGGGGI). 2 stretches are compositionally biased toward basic and acidic residues: residues 825–887 (VRER…RHFT) and 901–926 (NISEGRSNESRNGENRKDANSRDNKT).

This sequence belongs to the DEAD box helicase family. DDX42 subfamily. As to quaternary structure, transient component of the SF3B subcomplex of the 17S U2 SnRNP complex.

It localises to the cytoplasm. The protein localises to the nucleus. The enzyme catalyses ATP + H2O = ADP + phosphate + H(+). Its function is as follows. ATP-dependent RNA helicase that binds to partially double-stranded RNAs (dsRNAs) in order to unwind RNA secondary structures. Unwinding is promoted in the presence of single-strand binding proteins. Also mediates RNA duplex formation thereby displacing the single-strand RNA binding protein. ATP and ADP modulate its activity: ATP binding and hydrolysis by DDX42 triggers RNA strand separation, whereas the ADP-bound form of the protein triggers annealing of complementary RNA strands. Required for assembly of the 17S U2 SnRNP complex of the spliceosome, a large ribonucleoprotein complex that removes introns from transcribed pre-mRNAs: DDX42 associates transiently with the SF3B subcomplex of the 17S U2 SnRNP complex and is released after fulfilling its role in the assembly of 17S U2 SnRNP. This is ATP-dependent RNA helicase DDX42 (DDX42) from Gallus gallus (Chicken).